The sequence spans 396 residues: Glideosome-associated protein 50 (396 aa).

Residues 1–369 lie on the Lumenal side of the membrane; sequence MNYCKTTFHI…PMGNKDTFVR (369 aa). Residues histidine 195 and histidine 256 each coordinate a metal cation. Residues 370-390 traverse the membrane as a helical segment; sequence VVGTIGILIGSVIVFIGASSF. Topologically, residues 391-396 are cytoplasmic; it reads LSKNMK.

This sequence belongs to the metallophosphoesterase superfamily. Purple acid phosphatase family. As to quaternary structure, component of the glideosome complex composed of GAP50, GAP45, MTIP and MyoA; the complex is formed during the late schizont stage and in merozoites. MyoA, MTIP and GAP45 probably form an initial complex in the cytoplasm which is then recruited to the outer face of the inner membrane complex via the interaction with GAP50. Interacts with GAP45; the interaction is independent of GAP45 phosphorylation status and can also occur independently of the formation of the glideosome complex. Interacts with human factor H isoform CFH (via sushi 6-7 domains) and isoform FHL-1 (via sushi 6-7 domains); the interaction occurs in the vector mosquito midgut at the surface of activated gametocytes; the interaction protects the parasite from alternative complement pathway-mediated elimination. It depends on a metal cation as a cofactor. The N-terminus signal is likely to be cleaved.

It is found in the inner membrane complex. Its subcellular location is the cell membrane. The protein resides in the endoplasmic reticulum membrane. The enzyme catalyses a phosphate monoester + H2O = an alcohol + phosphate. With respect to regulation, activity is independent of metal ions. In terms of biological role, component of the glideosome complex, an inner membrane complex structure involved in parasite gliding motility and host cell invasion. During the asexual blood stage, may play a role in the assembly and anchoring of the glideosome complex to the inner membrane complex. During the sexual stage in the vector mosquito midgut, protects gametocytes against host alternative complement pathway-mediated elimination by interacting with host complement inhibitor factor H. Has phosphatase activity towards nucleotides such as ATP, vitamins B1 and B6, phosphorylated sugars, glycerol phosphates and inositol triphosphates. However, the phosphatase activity is controversial. The polypeptide is Glideosome-associated protein 50 (Plasmodium falciparum (isolate 3D7)).